Here is a 61-residue protein sequence, read N- to C-terminus: Beta-toxin Tce4 (61 aa).

An LCN-type CS-alpha/beta domain is found at 1–61; the sequence is KEGYLMDHEG…KVWEYATNRC (61 aa). Disulfide bonds link C11-C61, C15-C37, C23-C42, and C27-C44. At C61 the chain carries Cysteine amide.

The protein belongs to the long (4 C-C) scorpion toxin superfamily. Sodium channel inhibitor family. Beta subfamily. In terms of tissue distribution, expressed by the venom gland.

It localises to the secreted. Functionally, beta toxins bind voltage-independently at site-4 of sodium channels (Nav) and shift the voltage of activation toward more negative potentials thereby affecting sodium channel activation and promoting spontaneous and repetitive firing. This is Beta-toxin Tce4 from Tityus cerroazul (Scorpion).